Reading from the N-terminus, the 141-residue chain is ATP synthase epsilon chain 1 (141 aa).

This sequence belongs to the ATPase epsilon chain family. F-type ATPases have 2 components, CF(1) - the catalytic core - and CF(0) - the membrane proton channel. CF(1) has five subunits: alpha(3), beta(3), gamma(1), delta(1), epsilon(1). CF(0) has three main subunits: a, b and c.

Its subcellular location is the cell inner membrane. Functionally, produces ATP from ADP in the presence of a proton gradient across the membrane. In Thiobacillus denitrificans (strain ATCC 25259 / T1), this protein is ATP synthase epsilon chain 1.